The following is a 315-amino-acid chain: 4-hydroxy-3-methylbut-2-enyl diphosphate reductase (315 aa).

Position 12 (Cys-12) interacts with [4Fe-4S] cluster. Residues His-41 and His-74 each contribute to the (2E)-4-hydroxy-3-methylbut-2-enyl diphosphate site. Dimethylallyl diphosphate is bound by residues His-41 and His-74. Positions 41 and 74 each coordinate isopentenyl diphosphate. Cys-96 provides a ligand contact to [4Fe-4S] cluster. (2E)-4-hydroxy-3-methylbut-2-enyl diphosphate is bound at residue His-124. Residue His-124 coordinates dimethylallyl diphosphate. An isopentenyl diphosphate-binding site is contributed by His-124. The active-site Proton donor is the Glu-126. Thr-168 contributes to the (2E)-4-hydroxy-3-methylbut-2-enyl diphosphate binding site. A [4Fe-4S] cluster-binding site is contributed by Cys-198. Residues Ser-226, Ser-227, Asn-228, and Ser-270 each contribute to the (2E)-4-hydroxy-3-methylbut-2-enyl diphosphate site. The dimethylallyl diphosphate site is built by Ser-226, Ser-227, Asn-228, and Ser-270. Residues Ser-226, Ser-227, Asn-228, and Ser-270 each contribute to the isopentenyl diphosphate site.

It belongs to the IspH family. It depends on [4Fe-4S] cluster as a cofactor.

It catalyses the reaction isopentenyl diphosphate + 2 oxidized [2Fe-2S]-[ferredoxin] + H2O = (2E)-4-hydroxy-3-methylbut-2-enyl diphosphate + 2 reduced [2Fe-2S]-[ferredoxin] + 2 H(+). The catalysed reaction is dimethylallyl diphosphate + 2 oxidized [2Fe-2S]-[ferredoxin] + H2O = (2E)-4-hydroxy-3-methylbut-2-enyl diphosphate + 2 reduced [2Fe-2S]-[ferredoxin] + 2 H(+). It participates in isoprenoid biosynthesis; dimethylallyl diphosphate biosynthesis; dimethylallyl diphosphate from (2E)-4-hydroxy-3-methylbutenyl diphosphate: step 1/1. It functions in the pathway isoprenoid biosynthesis; isopentenyl diphosphate biosynthesis via DXP pathway; isopentenyl diphosphate from 1-deoxy-D-xylulose 5-phosphate: step 6/6. Catalyzes the conversion of 1-hydroxy-2-methyl-2-(E)-butenyl 4-diphosphate (HMBPP) into a mixture of isopentenyl diphosphate (IPP) and dimethylallyl diphosphate (DMAPP). Acts in the terminal step of the DOXP/MEP pathway for isoprenoid precursor biosynthesis. The polypeptide is 4-hydroxy-3-methylbut-2-enyl diphosphate reductase (Pseudomonas putida (strain ATCC 700007 / DSM 6899 / JCM 31910 / BCRC 17059 / LMG 24140 / F1)).